We begin with the raw amino-acid sequence, 295 residues long: Ethanolamine ammonia-lyase small subunit (295 aa).

The adenosylcob(III)alamin site is built by valine 207, glutamate 228, and cysteine 258.

It belongs to the EutC family. In terms of assembly, the basic unit is a heterodimer which dimerizes to form tetramers. The heterotetramers trimerize; 6 large subunits form a core ring with 6 small subunits projecting outwards. It depends on adenosylcob(III)alamin as a cofactor.

It localises to the bacterial microcompartment. It carries out the reaction ethanolamine = acetaldehyde + NH4(+). It participates in amine and polyamine degradation; ethanolamine degradation. Catalyzes the deamination of various vicinal amino-alcohols to oxo compounds. Allows this organism to utilize ethanolamine as the sole source of nitrogen and carbon in the presence of external vitamin B12. The chain is Ethanolamine ammonia-lyase small subunit from Escherichia coli (strain UTI89 / UPEC).